The following is a 303-amino-acid chain: MLDQISLEIPKGTIYGLVGHSGAGKSTLLRTINGLEGFDEGELWVDGVDLQSLQGDALRVFRKNIGMIFQHFSLMARQNVFENVALPLRCWKYPEAEIQKRVFNLLSLVGLESKSDSYPSALSGGQKQRVAIARALTLEPQILLSDEATSALDPSMTQSILDLLQTINQELGVTVVLVTHEMEVVKKLCHHAAFLEGGKLLRSGNIEELFLQPDPKMRHFLGESEVLPKEGVNIRLYFPKEVAQNPIITQMARQLSLDFSIVWGKLERFGEDVLGSLVINIPEARQEEAERFLESSGVRWEVL.

One can recognise an ABC transporter domain in the interval 1–222 (MLDQISLEIP…PDPKMRHFLG (222 aa)). 19–26 (GHSGAGKS) contacts ATP.

This sequence belongs to the ABC transporter superfamily. Methionine importer (TC 3.A.1.24) family. As to quaternary structure, the complex is composed of two ATP-binding proteins (MetN), two transmembrane proteins (MetI) and a solute-binding protein (MetQ).

It localises to the cell inner membrane. The enzyme catalyses L-methionine(out) + ATP + H2O = L-methionine(in) + ADP + phosphate + H(+). It catalyses the reaction D-methionine(out) + ATP + H2O = D-methionine(in) + ADP + phosphate + H(+). In terms of biological role, part of the ABC transporter complex MetNIQ involved in methionine import. Responsible for energy coupling to the transport system. The chain is Methionine import ATP-binding protein MetN from Wolinella succinogenes (strain ATCC 29543 / DSM 1740 / CCUG 13145 / JCM 31913 / LMG 7466 / NCTC 11488 / FDC 602W) (Vibrio succinogenes).